A 291-amino-acid polypeptide reads, in one-letter code: NAD kinase (291 aa).

Aspartate 73 serves as the catalytic Proton acceptor. Residues 73–74, 147–148, arginine 175, aspartate 177, and glutamine 246 contribute to the NAD(+) site; these read DG and ND.

This sequence belongs to the NAD kinase family. A divalent metal cation is required as a cofactor.

It is found in the cytoplasm. It carries out the reaction NAD(+) + ATP = ADP + NADP(+) + H(+). In terms of biological role, involved in the regulation of the intracellular balance of NAD and NADP, and is a key enzyme in the biosynthesis of NADP. Catalyzes specifically the phosphorylation on 2'-hydroxyl of the adenosine moiety of NAD to yield NADP. The protein is NAD kinase of Laribacter hongkongensis (strain HLHK9).